The primary structure comprises 322 residues: NADH-cytochrome b5 reductase 2 (322 aa).

A helical membrane pass occupies residues 32 to 48 (LAPIYISVGLAGLGVGL). In terms of domain architecture, FAD-binding FR-type spans 72–176 (QGWVDLKLSE…KGPIPKYPWE (105 aa)). Residue 179–214 (KHKHICLIAGGTGITPMYQLARQIFKNPEDQTKVTL) participates in FAD binding.

The protein belongs to the flavoprotein pyridine nucleotide cytochrome reductase family. Requires FAD as cofactor.

It is found in the mitochondrion outer membrane. It catalyses the reaction 2 Fe(III)-[cytochrome b5] + NADH = 2 Fe(II)-[cytochrome b5] + NAD(+) + H(+). May mediate the reduction of outer membrane cytochrome b5. The polypeptide is NADH-cytochrome b5 reductase 2 (mcr1) (Aspergillus clavatus (strain ATCC 1007 / CBS 513.65 / DSM 816 / NCTC 3887 / NRRL 1 / QM 1276 / 107)).